The sequence spans 282 residues: Bis(5'-nucleosyl)-tetraphosphatase, symmetrical (282 aa).

This sequence belongs to the Ap4A hydrolase family.

The catalysed reaction is P(1),P(4)-bis(5'-adenosyl) tetraphosphate + H2O = 2 ADP + 2 H(+). Functionally, hydrolyzes diadenosine 5',5'''-P1,P4-tetraphosphate to yield ADP. This Enterobacter sp. (strain 638) protein is Bis(5'-nucleosyl)-tetraphosphatase, symmetrical.